A 215-amino-acid chain; its full sequence is 16S rRNA (adenine(1408)-N(1))-methyltransferase (215 aa).

S-adenosyl-L-methionine-binding positions include glycine 32, aspartate 55, 87–88, 102–107, and 191–193; these read AE, LMPWGS, and TSW.

The protein belongs to the methyltransferase superfamily. Kanamycin-apramycin resistance family.

The enzyme catalyses adenosine(1408) in 16S rRNA + S-adenosyl-L-methionine = N(1)-methyladenosine(1408) in 16S rRNA + S-adenosyl-L-homocysteine + H(+). Functionally, specifically methylates the N(1) position of adenine 1408 in 16S rRNA. Confers resistance to various aminoglycosides. The protein is 16S rRNA (adenine(1408)-N(1))-methyltransferase (kamB) of Streptoalloteichus hindustanus.